The following is a 271-amino-acid chain: Ribosomal RNA small subunit methyltransferase A (271 aa).

His-11, Leu-13, Gly-38, Glu-58, Asp-86, and Asn-101 together coordinate S-adenosyl-L-methionine.

It belongs to the class I-like SAM-binding methyltransferase superfamily. rRNA adenine N(6)-methyltransferase family. RsmA subfamily.

It localises to the cytoplasm. It carries out the reaction adenosine(1518)/adenosine(1519) in 16S rRNA + 4 S-adenosyl-L-methionine = N(6)-dimethyladenosine(1518)/N(6)-dimethyladenosine(1519) in 16S rRNA + 4 S-adenosyl-L-homocysteine + 4 H(+). In terms of biological role, specifically dimethylates two adjacent adenosines (A1518 and A1519) in the loop of a conserved hairpin near the 3'-end of 16S rRNA in the 30S particle. May play a critical role in biogenesis of 30S subunits. This chain is Ribosomal RNA small subunit methyltransferase A, found in Helicobacter pylori (strain HPAG1).